The primary structure comprises 426 residues: Serine--tRNA ligase (426 aa).

Position 233–235 (233–235) interacts with L-serine; sequence TAE. 264-266 lines the ATP pocket; that stretch reads RSE. Glutamate 287 contacts L-serine. Position 351–354 (351–354) interacts with ATP; sequence EISS. Serine 387 is an L-serine binding site.

It belongs to the class-II aminoacyl-tRNA synthetase family. Type-1 seryl-tRNA synthetase subfamily. In terms of assembly, homodimer. The tRNA molecule binds across the dimer.

The protein resides in the cytoplasm. It carries out the reaction tRNA(Ser) + L-serine + ATP = L-seryl-tRNA(Ser) + AMP + diphosphate + H(+). The enzyme catalyses tRNA(Sec) + L-serine + ATP = L-seryl-tRNA(Sec) + AMP + diphosphate + H(+). It functions in the pathway aminoacyl-tRNA biosynthesis; selenocysteinyl-tRNA(Sec) biosynthesis; L-seryl-tRNA(Sec) from L-serine and tRNA(Sec): step 1/1. Its function is as follows. Catalyzes the attachment of serine to tRNA(Ser). Is also able to aminoacylate tRNA(Sec) with serine, to form the misacylated tRNA L-seryl-tRNA(Sec), which will be further converted into selenocysteinyl-tRNA(Sec). In Francisella philomiragia subsp. philomiragia (strain ATCC 25017 / CCUG 19701 / FSC 153 / O#319-036), this protein is Serine--tRNA ligase.